The chain runs to 104 residues: UPF0145 protein GTNG_1265 (104 aa).

This sequence belongs to the UPF0145 family.

The sequence is that of UPF0145 protein GTNG_1265 from Geobacillus thermodenitrificans (strain NG80-2).